The sequence spans 577 residues: Arginine--tRNA ligase (577 aa).

The short motif at 122–132 is the 'HIGH' region element; sequence PNVAKEMHVGH.

Belongs to the class-I aminoacyl-tRNA synthetase family. In terms of assembly, monomer.

The protein resides in the cytoplasm. The catalysed reaction is tRNA(Arg) + L-arginine + ATP = L-arginyl-tRNA(Arg) + AMP + diphosphate. This chain is Arginine--tRNA ligase, found in Vibrio campbellii (strain ATCC BAA-1116).